A 159-amino-acid polypeptide reads, in one-letter code: NADH-quinone oxidoreductase subunit I (159 aa).

4Fe-4S ferredoxin-type domains lie at R51–E80 and T90–N119. Residues C60, C63, C66, C70, C99, C102, C105, and C109 each contribute to the [4Fe-4S] cluster site.

The protein belongs to the complex I 23 kDa subunit family. In terms of assembly, NDH-1 is composed of 14 different subunits. Subunits NuoA, H, J, K, L, M, N constitute the membrane sector of the complex. [4Fe-4S] cluster is required as a cofactor.

Its subcellular location is the cell inner membrane. The catalysed reaction is a quinone + NADH + 5 H(+)(in) = a quinol + NAD(+) + 4 H(+)(out). NDH-1 shuttles electrons from NADH, via FMN and iron-sulfur (Fe-S) centers, to quinones in the respiratory chain. The immediate electron acceptor for the enzyme in this species is believed to be ubiquinone. Couples the redox reaction to proton translocation (for every two electrons transferred, four hydrogen ions are translocated across the cytoplasmic membrane), and thus conserves the redox energy in a proton gradient. This is NADH-quinone oxidoreductase subunit I from Rickettsia canadensis (strain McKiel).